The chain runs to 229 residues: Potassium/proton antiporter CemA (229 aa).

The next 3 membrane-spanning stretches (helical) occupy residues Ala-6 to Cys-26, Ile-107 to Gly-127, and Ile-189 to Ile-209.

This sequence belongs to the CemA family.

Its subcellular location is the plastid. It localises to the chloroplast inner membrane. It catalyses the reaction K(+)(in) + H(+)(out) = K(+)(out) + H(+)(in). In terms of biological role, contributes to K(+)/H(+) antiport activity by supporting proton efflux to control proton extrusion and homeostasis in chloroplasts in a light-dependent manner to modulate photosynthesis. Prevents excessive induction of non-photochemical quenching (NPQ) under continuous-light conditions. Indirectly promotes efficient inorganic carbon uptake into chloroplasts. The chain is Potassium/proton antiporter CemA from Barbarea verna (Land cress).